A 296-amino-acid polypeptide reads, in one-letter code: Cytidine deaminase (296 aa).

2 consecutive CMP/dCMP-type deaminase domains span residues threonine 47 to lysine 167 and aspartate 186 to valine 296. A substrate-binding site is contributed by asparagine 88–glutamate 90. Residue histidine 101 coordinates Zn(2+). Glutamate 103 acts as the Proton donor in catalysis. Residues cysteine 128 and cysteine 131 each coordinate Zn(2+).

Belongs to the cytidine and deoxycytidylate deaminase family. Homodimer. Zn(2+) is required as a cofactor.

It carries out the reaction cytidine + H2O + H(+) = uridine + NH4(+). The enzyme catalyses 2'-deoxycytidine + H2O + H(+) = 2'-deoxyuridine + NH4(+). In terms of biological role, this enzyme scavenges exogenous and endogenous cytidine and 2'-deoxycytidine for UMP synthesis. The protein is Cytidine deaminase of Shewanella sp. (strain MR-7).